The following is a 95-amino-acid chain: Aspartyl/glutamyl-tRNA(Asn/Gln) amidotransferase subunit C (95 aa).

The protein belongs to the GatC family. In terms of assembly, heterotrimer of A, B and C subunits.

It catalyses the reaction L-glutamyl-tRNA(Gln) + L-glutamine + ATP + H2O = L-glutaminyl-tRNA(Gln) + L-glutamate + ADP + phosphate + H(+). It carries out the reaction L-aspartyl-tRNA(Asn) + L-glutamine + ATP + H2O = L-asparaginyl-tRNA(Asn) + L-glutamate + ADP + phosphate + 2 H(+). Its function is as follows. Allows the formation of correctly charged Asn-tRNA(Asn) or Gln-tRNA(Gln) through the transamidation of misacylated Asp-tRNA(Asn) or Glu-tRNA(Gln) in organisms which lack either or both of asparaginyl-tRNA or glutaminyl-tRNA synthetases. The reaction takes place in the presence of glutamine and ATP through an activated phospho-Asp-tRNA(Asn) or phospho-Glu-tRNA(Gln). In Halorhodospira halophila (strain DSM 244 / SL1) (Ectothiorhodospira halophila (strain DSM 244 / SL1)), this protein is Aspartyl/glutamyl-tRNA(Asn/Gln) amidotransferase subunit C.